The chain runs to 1801 residues: U3 small nucleolar RNA-associated protein 10 (1801 aa).

The HEAT 1 repeat unit spans residues Ile-582 to Lys-619. A run of 2 helical transmembrane segments spans residues Ile-945–Asn-965 and Ala-1001–Met-1021. 4 HEAT repeats span residues Gln-1045–His-1082, Leu-1252–Glu-1289, Asn-1296–Lys-1334, and Ala-1757–Glu-1794.

The protein belongs to the HEATR1/UTP10 family. As to quaternary structure, component of the ribosomal small subunit (SSU) processome.

The protein localises to the nucleus. The protein resides in the nucleolus. It is found in the membrane. Functionally, involved in nucleolar processing of pre-18S ribosomal RNA. Involved in ribosome biosynthesis. This is U3 small nucleolar RNA-associated protein 10 from Aspergillus terreus (strain NIH 2624 / FGSC A1156).